Here is a 560-residue protein sequence, read N- to C-terminus: MGAPILASAAHAVPALETGGHAMDASITSRETKGGRRLWYRMRVIQQPERARACGSGPKSSADRRPVDPPPVVELRIYEGQTWDQAQEKDITFVYNANFFLFATLEHARIMAHARGSASSANTPPVLTGMPVSGMAYLDRPEEAGYFLFPDLSVRHEGRYKLTFNLYEETKEDKDKDKERDVESQPPLTGLSPATGGSFDFRMEVKSQDFIVYSAKKFPGLAESTALSRVVAEQGCRVRIRRDVRMRRRDGKGAGDYDNGEEEYNRRRRTATPDNRNNDFAARARSMSGSTERTPYSADPQRRPSMADYPSQYAQNPPAGGHLQFLGGNASSQYPAAPPQPFAQPPSVPASPVYPPTQAAPYQMQTSYPPPPPPPAPKRERTPSQSGYAPINPAPRRESIHHDYRPSGPIQLPPLPPPPYYPPTPQQSHMPPPQPPQVLPPLQIDSNSKSNNRLPMPSPTALANSAPRPLASLAPLAPLMQSTSSSAGKGPVHPATLPPPAVYAGAKRAHDESFWSEPEHGRYQNGTRDKGRSEDIITDPTSMPFRRADGTEADGIRLRY.

One can recognise a Velvet domain in the interval 35 to 241; sequence GRRLWYRMRV…AEQGCRVRIR (207 aa). Residues 49 to 54 carry the Nuclear localization signal motif; it reads ERARAC. Disordered stretches follow at residues 49–70, 171–197, and 250–560; these read ERAR…VDPP, KEDK…ATGG, and DGKG…RLRY. The span at 171-183 shows a compositional bias: basic and acidic residues; that stretch reads KEDKDKDKERDVE. Residues 336–355 are compositionally biased toward pro residues; it reads AAPPQPFAQPPSVPASPVYP. Over residues 395–405 the composition is skewed to basic and acidic residues; it reads PRRESIHHDYR. Residues 411 to 439 show a composition bias toward pro residues; it reads QLPPLPPPPYYPPTPQQSHMPPPQPPQVL. Positions 444–453 are enriched in polar residues; sequence IDSNSKSNNR. Residues 455 to 496 are PEST; that stretch reads PMPSPTALANSAPRPLASLAPLAPLMQSTSSSAGKGPVHPAT. Over residues 461-479 the composition is skewed to low complexity; sequence ALANSAPRPLASLAPLAPL. Basic and acidic residues-rich tracts occupy residues 508–535 and 546–560; these read RAHD…RSED and RRAD…RLRY.

Belongs to the velvet family. VeA subfamily. Component of the heterotrimeric velvet complex composed of laeA, veA and velB; VeA acting as a bridging protein between laeA and velB.

Its subcellular location is the nucleus. It localises to the cytoplasm. Component of the velvet transcription factor complex that controls sexual/asexual developmental ratio in response to light, promoting sexual development in the darkness while stimulating asexual sporulation under illumination. The velvet complex acts as a global regulator for secondary metabolite gene expression. Positively regulates chaetoglobosin A biosynthesis by controlling the expression of core genes of the chaetoglobosin A biosynthetic gene cluster and other relevant regulators in a light-dependent manner. VeA directly regulates transcription factors brlA, laeA, and the chaetoglobosin A cluster-specific transcription regulator cheR. Also directly regulates the expression of one of the chaetoglobosin A cluster cytochrome P450 monooxygenases (cheE or cheG), but only indirectly regulates the expression of the PKS-NRPS hybrid cheA. Moreover, VeA has a significant effect on the asexual spores production, irrespective of light or dark condition. The polypeptide is Developmental and secondary metabolism regulator veA (Chaetomium globosum (strain ATCC 6205 / CBS 148.51 / DSM 1962 / NBRC 6347 / NRRL 1970) (Soil fungus)).